Here is a 273-residue protein sequence, read N- to C-terminus: Large ribosomal subunit protein uL2cz/uL2cy (273 aa).

2 disordered regions span residues 1–23 (MAIH…SQVK) and 224–273 (NPVD…RRRK).

It belongs to the universal ribosomal protein uL2 family. Part of the 50S ribosomal subunit.

It is found in the plastid. Its subcellular location is the chloroplast. The sequence is that of Large ribosomal subunit protein uL2cz/uL2cy (rpl2-A) from Amborella trichopoda.